Here is a 929-residue protein sequence, read N- to C-terminus: Band 3 anion transport protein (929 aa).

At Met-1 the chain carries N-acetylmethionine. The Cytoplasmic segment spans residues 1 to 422 (MGDMRDHEEV…LSDITDALSP (422 aa)). At Ser-18 the chain carries Phosphoserine. Phosphotyrosine is present on residues Tyr-31 and Tyr-56. The interval 46 to 67 (ALPTEQTATDYVPSSTSTPHPS) is disordered. Over residues 58 to 67 (PSSTSTPHPS) the composition is skewed to low complexity. The tract at residues 69 to 303 (GQVYVELQEL…LGRAAATLMT (235 aa)) is globular. Residues 190–199 (AVLTRSGGAS) are interaction with ANK1. Ser-199, Ser-222, and Ser-363 each carry phosphoserine. The interval 317 to 370 (REELLRSLESFLDCSLVLPPTDAPSEKALLNLVPVQKELLRRRYLPSPAKPDPN) is dimerization arm. The tract at residues 366–389 (KPDPNLYNTLDLNGGKGGPGDEDD) is disordered. A Phosphotyrosine modification is found at Tyr-372. Thr-374 bears the Phosphothreonine mark. The chain crosses the membrane as a helical span at residues 423 to 446 (QVLAAVIFIYFAALSPAVTFGGLL). Topologically, residues 447–454 (GEKTRNLM) are extracellular. A helical membrane pass occupies residues 455–475 (GVSELLISTAVQGILFALLGA). The Cytoplasmic portion of the chain corresponds to 476 to 478 (QPL). The chain crosses the membrane as a discontinuously helical span at residues 479-495 (LVLGFSGPLLVFEEAFF). Residues 496-504 (SFCESNNLE) are Extracellular-facing. The chain crosses the membrane as a helical span at residues 505 to 525 (YIVGRAWIGFWLILLVMLVVA). Residues 526-537 (FEGSFLVQYISR) are Cytoplasmic-facing. Residues 538–560 (YTQEIFSFLISLIFIYETFSKLI) traverse the membrane as a helical segment. Residues 561–588 (KIFQDYPLQQTYAPVVMKPKPQGPVPNT) are Extracellular-facing. The helical transmembrane segment at 589-609 (ALFSLVLMAGTFLLAMTLRKF) threads the bilayer. Topologically, residues 610-620 (KNSTYFPGKLR) are cytoplasmic. Residues 621 to 641 (RVIGDFGVPISILIMVLVDSF) traverse the membrane as a helical segment. The Extracellular portion of the chain corresponds to 642 to 681 (IKGTYTQKLSVPDGLKVSNSSARGWVIHPLGLYRLFPTWM). N-linked (GlcNAc...) asparagine glycosylation occurs at Asn-660. A helical membrane pass occupies residues 682 to 702 (MFASVLPALLVFILIFLESQI). Residues 703 to 718 (TTLIVSKPERKMIKGS) are Cytoplasmic-facing. A helical transmembrane segment spans residues 719 to 737 (GFHLDLLLVVGMGGVAALF). A discontinuously helical membrane pass occupies residues 738–755 (GMPWLSATTVRSVTHANA). At 756–778 (LTVMGKASGPGAAAQIQEVKEQR) the chain is on the cytoplasmic side. Helical transmembrane passes span 779–799 (ISGL…PILS) and 800–818 (RIPL…VTSL). Over 819–856 (SGIQLFDRILLLFKPPKYHPDVPFVKRVKTWRMHLFTG) the chain is Cytoplasmic. The discontinuously helical intramembrane region spans 857–887 (IQIICLAVLWVVKSTPASLALPFVLILTVPL). Cys-861 carries S-palmitoyl cysteine lipidation. At 888–929 (RRLILPLIFRELELQCLDGDDAKVTFDEENGLDEYDEVPMPV) the chain is on the cytoplasmic side. Position 922 is a phosphotyrosine (Tyr-922).

The protein belongs to the anion exchanger (TC 2.A.31) family. As to quaternary structure, a dimer in solution, but in its membrane environment, it exists primarily as a mixture of dimers and tetramers and spans the membrane asymmetrically. Component of the ankyrin-1 complex in the erythrocyte, composed of ANK1, RHCE, RHAG, SLC4A1, EPB42, GYPA, GYPB and AQP1. Interacts with STOM; this interaction positively regulates SLC4A1 activity. Interacts with GYPA; a GYPA monomer is bound at each end of the SLC4A1 dimer forming a heterotetramer. Three SLC4A1 dimers (Band 3-I, Band 3-II and Band 3-III) participates in the ankyrin-1 complex. Interacts (via the cytoplasmic domain) with EPB42; this interaction is mediated by the SLC4A1 Band 3-I dimer. Interacts (via the cytoplasmic domain) directly with ANK1; this interaction is mediated by the SLC4A1 Band 3-II and Band 3-III dimers. Interacts with TMEM139. Detected in erythrocytes (at protein level).

It is found in the cell membrane. Its subcellular location is the basolateral cell membrane. It catalyses the reaction hydrogencarbonate(in) + chloride(out) = hydrogencarbonate(out) + chloride(in). In terms of biological role, functions both as a transporter that mediates electroneutral anion exchange across the cell membrane and as a structural protein. Component of the ankyrin-1 complex of the erythrocyte membrane; required for normal flexibility and stability of the erythrocyte membrane and for normal erythrocyte shape via the interactions of its cytoplasmic domain with cytoskeletal proteins, glycolytic enzymes, and hemoglobin. Functions as a transporter that mediates the 1:1 exchange of inorganic anions across the erythrocyte membrane. Mediates chloride-bicarbonate exchange in the kidney, and is required for normal acidification of the urine. This is Band 3 anion transport protein from Mus musculus (Mouse).